The sequence spans 377 residues: MGISQVHYCNGDQNLEANLLDHEETESFSVPQTKNCKRWLRVSIYAIFVIFCQPLATVLGRLYYENGGKSTYVVTLLQLIGFPVLILFRFFSRIRQPKSTDTNFSQSPSFTTLASVYLCTGLLVSAYAYLSAVGLLYLPVSTFSLILASQLAFTAFFSYFLNSQKFTPLIVNSLFLLTVSSALLVVNTDSENTTNVSRVQYVIGFICTIGASAGIGLVLSLIQLLFRKVFTKHTSSAVLDLANYQSLVATCVVLIGLFASGEWRTLPSEMRNYKLGKVSYILTLASAAIFWQVYTVGCVGLIFESSSVFSNSITAVGLPIVPVVAVIVFHDKMDASKIFSIILAIWGFLSFVYQHYLDEKKLKTCQTKPVEEETQTL.

A run of 10 helical transmembrane segments spans residues 39 to 59 (WLRV…ATVL), 71 to 91 (TYVV…FRFF), 107 to 127 (SPSF…VSAY), 128 to 148 (AYLS…LILA), 166 to 186 (FTPL…LLVV), 202 to 222 (VIGF…LSLI), 238 to 258 (VLDL…IGLF), 283 to 303 (TLAS…GLIF), 309 to 329 (FSNS…VIVF), and 338 to 358 (IFSI…HYLD).

The protein belongs to the purine permeases (TC 2.A.7.14) family.

Its subcellular location is the membrane. The polypeptide is Probable purine permease 22 (PUP22) (Arabidopsis thaliana (Mouse-ear cress)).